The following is a 698-amino-acid chain: Polyphosphate kinase 1 (698 aa).

Residue N46 coordinates ATP. The Mg(2+) site is built by R377 and R407. H437 functions as the Phosphohistidine intermediate in the catalytic mechanism. The ATP site is built by Y470, R566, and H594.

It belongs to the polyphosphate kinase 1 (PPK1) family. The cofactor is Mg(2+). Post-translationally, an intermediate of this reaction is the autophosphorylated ppk in which a phosphate is covalently linked to a histidine residue through a N-P bond.

It catalyses the reaction [phosphate](n) + ATP = [phosphate](n+1) + ADP. Functionally, catalyzes the reversible transfer of the terminal phosphate of ATP to form a long-chain polyphosphate (polyP). The polypeptide is Polyphosphate kinase 1 (Chlorobaculum tepidum (strain ATCC 49652 / DSM 12025 / NBRC 103806 / TLS) (Chlorobium tepidum)).